Here is a 470-residue protein sequence, read N- to C-terminus: MKVKSPLEVYNYLPRTNCGECGFDTCMSFAAHILDRSVTPLDCKPLVRDAEKDPKVKKKLEELLELTAPEIAEVVIGVGENAVKIGGEEVLHRHELTFFNPTGFFYDVWDTMDDKALEERCDRVVSYKKFYVGNFLTLDGFAVRCTSGDPKRYREVVKKVASYGKPLILVALDSECMKAALEEVADQRPLMYAATEGNWKEFLKLALEYKVPVTLRAKDLDLLKSMAVTFKQAGVKDIVLDPVTEPLGEGLKGTFERVIQLRRTAIAGQDKDVAYPIMITPIAAWLIEGDDVTKSYWEAVIASIFIVKYGDVMIFRSIDQHVVMPTITLRFNIYTDPRTPVQVEPGLRAINDPGPDDPVFITTNFALTYYTVESDLTSGGIKGWLLVLNTEGLGVEVSVAGGQFTASKVKELIEETKIEEKVNHRYLVIPGLAARLQGAIEDETGWKVLVGPMDSGRIKGWLEKNWPPKE.

Residues 1 to 62 (MKVKSPLEVY…DPKVKKKLEE (62 aa)) enclose the 4Fe-4S domain. 4 residues coordinate [4Fe-4S] cluster: cysteine 18, cysteine 21, cysteine 26, and cysteine 43.

In terms of assembly, heterodimer of delta and gamma chains. The ACDS complex is made up of alpha, epsilon, beta, gamma and delta chains with a probable stoichiometry of (alpha(2)epsilon(2))(4)-beta(8)-(gamma(1)delta(1))(8). It depends on corrinoid as a cofactor. The cofactor is [4Fe-4S] cluster.

The catalysed reaction is 5,6,7,8-tetrahydrosarcinapterin + methyl-Co(III)-[corrinoid Fe-S protein] = 5-methyltetrahydrosarcinapterin + Co(I)-[corrinoid Fe-S protein] + H(+). Its function is as follows. Part of a complex that catalyzes the reversible cleavage of acetyl-CoA, allowing autotrophic growth from CO(2). The chain is Acetyl-CoA decarbonylase/synthase complex subunit gamma from Archaeoglobus fulgidus (strain ATCC 49558 / DSM 4304 / JCM 9628 / NBRC 100126 / VC-16).